A 288-amino-acid chain; its full sequence is RELT-like protein 1 (288 aa).

The first 23 residues, 1-23 (MAPPAASGIPSIAPSLGPTAVWL), serve as a signal peptide directing secretion. Over 24–57 (GNRSDLGDVQALASRDLPTTTVTAGNNNKPEHLE) the chain is Extracellular. Asn-25 carries N-linked (GlcNAc...) asparagine glycosylation. Residues 58–78 (YVAFVLVPVFFIMGLLGILIC) traverse the membrane as a helical segment. Over 79 to 288 (HVLKKKGYRC…EGTQERRSSE (210 aa)) the chain is Cytoplasmic. Disordered regions lie at residues 145–172 (FEPE…GAAS) and 237–288 (HKSN…RSSE). A compositionally biased stretch (low complexity) spans 152–172 (SPNAPGSPTSPGSPLSPGAAS). Over residues 237 to 246 (HKSNSKERKS) the composition is skewed to basic and acidic residues.

The protein belongs to the RELT family.

The protein localises to the cell membrane. The polypeptide is RELT-like protein 1 (RELL1) (Gallus gallus (Chicken)).